A 220-amino-acid polypeptide reads, in one-letter code: Large ribosomal subunit protein uL1 (220 aa).

Belongs to the universal ribosomal protein uL1 family. In terms of assembly, part of the 50S ribosomal subunit.

In terms of biological role, binds directly to 23S rRNA. The L1 stalk is quite mobile in the ribosome, and is involved in E site tRNA release. Functionally, protein L1 is also a translational repressor protein, it controls the translation of the L11 operon by binding to its mRNA. This is Large ribosomal subunit protein uL1 from Ehrlichia canis (strain Jake).